The sequence spans 310 residues: p-hydroxybenzoic acid efflux pump subunit AaeA (310 aa).

A helical membrane pass occupies residues 12–32; sequence AITVVLVILAFIAIFNAWVYY.

Belongs to the membrane fusion protein (MFP) (TC 8.A.1) family.

Its subcellular location is the cell inner membrane. Its function is as follows. Forms an efflux pump with AaeB. This Escherichia coli O8 (strain IAI1) protein is p-hydroxybenzoic acid efflux pump subunit AaeA.